Reading from the N-terminus, the 151-residue chain is Calmodulin-like protein 9 (151 aa).

4 EF-hand domains span residues 8 to 43 (EQIQ…MGKN), 44 to 79 (PKAE…NTSQ), 81 to 116 (SASD…MGMK), and 117 to 151 (ITAE…AASY). Positions 94, 96, 98, 105, 130, 132, 134, and 141 each coordinate Ca(2+).

Belongs to the calmodulin family. Interacts with IQD1. Interacts with ILK1. Binds to ABCG36. As to expression, expressed in leaves, flowers and siliques.

Potential calcium sensor. The sequence is that of Calmodulin-like protein 9 from Arabidopsis thaliana (Mouse-ear cress).